The primary structure comprises 207 residues: Ribonuclease HII (207 aa).

The RNase H type-2 domain occupies Gln20–Glu207. A divalent metal cation is bound by residues Asp26, Glu27, and Asp118.

The protein belongs to the RNase HII family. It depends on Mn(2+) as a cofactor. Mg(2+) serves as cofactor.

The protein resides in the cytoplasm. The catalysed reaction is Endonucleolytic cleavage to 5'-phosphomonoester.. Its function is as follows. Endonuclease that specifically degrades the RNA of RNA-DNA hybrids. The polypeptide is Ribonuclease HII (Aliivibrio fischeri (strain MJ11) (Vibrio fischeri)).